A 209-amino-acid polypeptide reads, in one-letter code: Potassium-transporting ATPase KdpC subunit (209 aa).

The chain crosses the membrane as a helical span at residues 10 to 30 (VISLVFLFVLGFLFPTVTSLI).

Belongs to the KdpC family. As to quaternary structure, the system is composed of three essential subunits: KdpA, KdpB and KdpC.

The protein resides in the cell membrane. In terms of biological role, part of the high-affinity ATP-driven potassium transport (or Kdp) system, which catalyzes the hydrolysis of ATP coupled with the electrogenic transport of potassium into the cytoplasm. This subunit acts as a catalytic chaperone that increases the ATP-binding affinity of the ATP-hydrolyzing subunit KdpB by the formation of a transient KdpB/KdpC/ATP ternary complex. This Thermoplasma volcanium (strain ATCC 51530 / DSM 4299 / JCM 9571 / NBRC 15438 / GSS1) protein is Potassium-transporting ATPase KdpC subunit.